A 251-amino-acid polypeptide reads, in one-letter code: MTHNKTIKKVYIVGAGPGDPELLTLKAQRVLREADVVIYDALVNPEILQHCKPNAEIIKVGKRRNNHSFSQLQIASLLIDRAKKGERVIRLKGGDPLIFGRLGEEILELFSKNIEIEIIPGITSAFAVAADMKFPLTHRQLGSSITFLTGEEFYEKTTNKLKWERIIWGADTIIVYMILYNLPKIIKKFLSVGYSAEKPIVLVQWASLKKKNFLIGTIGTIIHQVIESKFGPPSLAIIGEVIEISSIIQKL.

S-adenosyl-L-homocysteine contacts are provided by residues Pro-17, Gly-93–Asp-95, Thr-123–Ser-124, Met-177, and Ala-206.

Belongs to the precorrin methyltransferase family.

Its subcellular location is the plastid. The protein resides in the chloroplast. The enzyme catalyses uroporphyrinogen III + 2 S-adenosyl-L-methionine = precorrin-2 + 2 S-adenosyl-L-homocysteine + H(+). It functions in the pathway cofactor biosynthesis; adenosylcobalamin biosynthesis; precorrin-2 from uroporphyrinogen III: step 1/1. It participates in porphyrin-containing compound metabolism; siroheme biosynthesis; precorrin-2 from uroporphyrinogen III: step 1/1. Functionally, catalyzes the two successive C-2 and C-7 methylation reactions involved in the conversion of uroporphyrinogen III to precorrin-2 via the intermediate formation of precorrin-1. It is a step in the biosynthesis of both cobalamin (vitamin B12) and siroheme. This chain is Uroporphyrinogen-III C-methyltransferase (cobA), found in Cyanidium caldarium (Red alga).